The sequence spans 436 residues: Hydrogenobyrinate a,c-diamide synthase (436 aa).

In terms of domain architecture, GATase cobBQ-type spans 244 to 435 (HIAVARDDAF…MHVIDFCGEK (192 aa)). The Nucleophile role is filled by cysteine 327.

It belongs to the CobB/CbiA family. Mg(2+) is required as a cofactor.

The enzyme catalyses hydrogenobyrinate + 2 L-glutamine + 2 ATP + 2 H2O = hydrogenobyrinate a,c-diamide + 2 L-glutamate + 2 ADP + 2 phosphate + 2 H(+). It functions in the pathway cofactor biosynthesis; adenosylcobalamin biosynthesis; cob(II)yrinate a,c-diamide from precorrin-2 (aerobic route): step 9/10. In terms of biological role, catalyzes the ATP-dependent amidation of the two carboxylate groups at positions a and c of hydrogenobyrinate, using either L-glutamine or ammonia as the nitrogen source. In Brucella anthropi (strain ATCC 49188 / DSM 6882 / CCUG 24695 / JCM 21032 / LMG 3331 / NBRC 15819 / NCTC 12168 / Alc 37) (Ochrobactrum anthropi), this protein is Hydrogenobyrinate a,c-diamide synthase.